The chain runs to 502 residues: ATP synthase subunit alpha (502 aa).

An ATP-binding site is contributed by 169-176 (GDRQTGKT).

The protein belongs to the ATPase alpha/beta chains family. In terms of assembly, F-type ATPases have 2 components, CF(1) - the catalytic core - and CF(0) - the membrane proton channel. CF(1) has five subunits: alpha(3), beta(3), gamma(1), delta(1), epsilon(1). CF(0) has three main subunits: a(1), b(2) and c(9-12). The alpha and beta chains form an alternating ring which encloses part of the gamma chain. CF(1) is attached to CF(0) by a central stalk formed by the gamma and epsilon chains, while a peripheral stalk is formed by the delta and b chains.

The protein localises to the cell inner membrane. It catalyses the reaction ATP + H2O + 4 H(+)(in) = ADP + phosphate + 5 H(+)(out). Functionally, produces ATP from ADP in the presence of a proton gradient across the membrane. The alpha chain is a regulatory subunit. The chain is ATP synthase subunit alpha from Trichlorobacter lovleyi (strain ATCC BAA-1151 / DSM 17278 / SZ) (Geobacter lovleyi).